Consider the following 356-residue polypeptide: Probable farnesyl diphosphate synthase DDB_G0278823 (356 aa).

Residues lysine 55, arginine 58, and glutamine 94 each coordinate isopentenyl diphosphate. Aspartate 101 and aspartate 105 together coordinate Mg(2+). Arginine 110 is a binding site for dimethylallyl diphosphate. Arginine 111 contributes to the isopentenyl diphosphate binding site. The dimethylallyl diphosphate site is built by lysine 203, threonine 204, glutamine 243, lysine 260, and lysine 269.

The protein belongs to the FPP/GGPP synthase family. It depends on Mg(2+) as a cofactor.

The protein localises to the cytoplasm. The enzyme catalyses isopentenyl diphosphate + dimethylallyl diphosphate = (2E)-geranyl diphosphate + diphosphate. It carries out the reaction isopentenyl diphosphate + (2E)-geranyl diphosphate = (2E,6E)-farnesyl diphosphate + diphosphate. It participates in isoprenoid biosynthesis; farnesyl diphosphate biosynthesis; farnesyl diphosphate from geranyl diphosphate and isopentenyl diphosphate: step 1/1. The protein operates within isoprenoid biosynthesis; geranyl diphosphate biosynthesis; geranyl diphosphate from dimethylallyl diphosphate and isopentenyl diphosphate: step 1/1. Inhibited by aminobisphosphonate drugs (aBP), such as risedronate and alendronate. Its function is as follows. Key enzyme in isoprenoid biosynthesis which catalyzes the formation of farnesyl diphosphate (FPP), a sterol precursor. This is Probable farnesyl diphosphate synthase DDB_G0278823 from Dictyostelium discoideum (Social amoeba).